The sequence spans 184 residues: Class II hydrophobin 6 (184 aa).

Positions 1–16 are cleaved as a signal peptide; it reads MNFMLLSAALASMAVA. 4 disulfides stabilise this stretch: cysteine 122-cysteine 169, cysteine 130-cysteine 160, cysteine 131-cysteine 143, and cysteine 170-cysteine 181.

Belongs to the cerato-ulmin hydrophobin family. As to quaternary structure, homotetramer. Further self-assembles to form highly ordered films at water-air interfaces through intermolecular interactions. Expressed in the mycellium.

Its subcellular location is the secreted. Its function is as follows. Aerial growth, conidiation, and dispersal of filamentous fungi in the environment rely upon a capability of their secreting small amphipathic proteins called hydrophobins (HPBs) with low sequence identity. Class I can self-assemble into an outermost layer of rodlet bundles on aerial cell surfaces, conferring cellular hydrophobicity that supports fungal growth, development and dispersal; whereas Class II form highly ordered films at water-air interfaces through intermolecular interactions but contribute nothing to the rodlet structure. Hcf-6 is a class II hydrophobin that is involved in adhesion and in tomato plants infection. Is secreted to form a coat both around and beneath the fungus. This chain is Class II hydrophobin 6, found in Passalora fulva (Tomato leaf mold).